Reading from the N-terminus, the 76-residue chain is ATP synthase peripheral stalk subunit F6, mitochondrial (76 aa).

N6-acetyllysine is present on residues K9, K14, and K47. N6-acetyllysine; alternate is present on residues K52 and K67. Residues K52 and K67 each carry the N6-succinyllysine; alternate modification. The residue at position 73 (K73) is an N6-acetyllysine. S76 carries the post-translational modification Phosphoserine.

The protein belongs to the eukaryotic ATPase subunit F6 family. Component of the ATP synthase complex composed at least of ATP5F1A/subunit alpha, ATP5F1B/subunit beta, ATP5MC1/subunit c (homooctomer), MT-ATP6/subunit a, MT-ATP8/subunit 8, ATP5ME/subunit e, ATP5MF/subunit f, ATP5MG/subunit g, ATP5MK/subunit k, ATP5MJ/subunit j, ATP5F1C/subunit gamma, ATP5F1D/subunit delta, ATP5F1E/subunit epsilon, ATP5PF/subunit F6, ATP5PB/subunit b, ATP5PD/subunit d, ATP5PO/subunit OSCP. ATP synthase complex consists of a soluble F(1) head domain (subunits alpha(3) and beta(3)) - the catalytic core - and a membrane F(0) domain - the membrane proton channel (subunits c, a, 8, e, f, g, k and j). These two domains are linked by a central stalk (subunits gamma, delta, and epsilon) rotating inside the F1 region and a stationary peripheral stalk (subunits F6, b, d, and OSCP).

The protein localises to the mitochondrion. It is found in the mitochondrion inner membrane. In terms of biological role, subunit F6, of the mitochondrial membrane ATP synthase complex (F(1)F(0) ATP synthase or Complex V) that produces ATP from ADP in the presence of a proton gradient across the membrane which is generated by electron transport complexes of the respiratory chain. ATP synthase complex consist of a soluble F(1) head domain - the catalytic core - and a membrane F(1) domain - the membrane proton channel. These two domains are linked by a central stalk rotating inside the F(1) region and a stationary peripheral stalk. During catalysis, ATP synthesis in the catalytic domain of F(1) is coupled via a rotary mechanism of the central stalk subunits to proton translocation. In vivo, can only synthesize ATP although its ATP hydrolase activity can be activated artificially in vitro. Part of the complex F(0) domain. Part of the complex F(0) domain and the peripheric stalk, which acts as a stator to hold the catalytic alpha(3)beta(3) subcomplex and subunit a/ATP6 static relative to the rotary elements. The sequence is that of ATP synthase peripheral stalk subunit F6, mitochondrial from Sus scrofa (Pig).